Here is a 159-residue protein sequence, read N- to C-terminus: Ribosomal RNA large subunit methyltransferase H (159 aa).

Residues Leu-76, Gly-108, and 127–132 (FSKMTL) contribute to the S-adenosyl-L-methionine site.

This sequence belongs to the RNA methyltransferase RlmH family. As to quaternary structure, homodimer.

It is found in the cytoplasm. The catalysed reaction is pseudouridine(1915) in 23S rRNA + S-adenosyl-L-methionine = N(3)-methylpseudouridine(1915) in 23S rRNA + S-adenosyl-L-homocysteine + H(+). Its function is as follows. Specifically methylates the pseudouridine at position 1915 (m3Psi1915) in 23S rRNA. In Bacillus anthracis (strain CDC 684 / NRRL 3495), this protein is Ribosomal RNA large subunit methyltransferase H.